Consider the following 255-residue polypeptide: Putative glycyl-radical enzyme activating enzyme MJ1632 (255 aa).

Residues 30-245 (SHISLSDKIT…SNVSCSLDFK (216 aa)) enclose the Radical SAM core domain. Cys-45, Cys-49, and Cys-52 together coordinate [4Fe-4S] cluster. Residues 51 to 53 (YCF), Gly-88, and 134 to 136 (DLK) each bind S-adenosyl-L-methionine.

Belongs to the organic radical-activating enzymes family. [4Fe-4S] cluster is required as a cofactor.

The enzyme catalyses glycyl-[protein] + reduced [flavodoxin] + S-adenosyl-L-methionine = glycin-2-yl radical-[protein] + semiquinone [flavodoxin] + 5'-deoxyadenosine + L-methionine + H(+). The polypeptide is Putative glycyl-radical enzyme activating enzyme MJ1632 (Methanocaldococcus jannaschii (strain ATCC 43067 / DSM 2661 / JAL-1 / JCM 10045 / NBRC 100440) (Methanococcus jannaschii)).